The chain runs to 330 residues: Methionyl-tRNA formyltransferase (330 aa).

117 to 120 (SLLP) provides a ligand contact to (6S)-5,6,7,8-tetrahydrofolate.

The protein belongs to the Fmt family.

It catalyses the reaction L-methionyl-tRNA(fMet) + (6R)-10-formyltetrahydrofolate = N-formyl-L-methionyl-tRNA(fMet) + (6S)-5,6,7,8-tetrahydrofolate + H(+). Its function is as follows. Attaches a formyl group to the free amino group of methionyl-tRNA(fMet). The formyl group appears to play a dual role in the initiator identity of N-formylmethionyl-tRNA by promoting its recognition by IF2 and preventing the misappropriation of this tRNA by the elongation apparatus. The chain is Methionyl-tRNA formyltransferase from Verminephrobacter eiseniae (strain EF01-2).